A 689-amino-acid polypeptide reads, in one-letter code: Glycine--tRNA ligase beta subunit (689 aa).

This sequence belongs to the class-II aminoacyl-tRNA synthetase family. In terms of assembly, tetramer of two alpha and two beta subunits.

It is found in the cytoplasm. It catalyses the reaction tRNA(Gly) + glycine + ATP = glycyl-tRNA(Gly) + AMP + diphosphate. The polypeptide is Glycine--tRNA ligase beta subunit (Hamiltonella defensa subsp. Acyrthosiphon pisum (strain 5AT)).